The chain runs to 906 residues: uncharacterized protein (906 aa).

Disordered stretches follow at residues 231–322 (KEDA…PSTI) and 865–906 (AGAY…DEDE). Residues 236–250 (TTKQTTTTTTTTPQT) show a composition bias toward low complexity. Residues 264 to 281 (TPTPAPAPKPTTPKPTPA) are compositionally biased toward pro residues. Over residues 302 to 314 (SVNNIPTPSDTNE) the composition is skewed to polar residues. A compositionally biased stretch (acidic residues) spans 867–906 (AYEDDDDDEGEGNEDDEDNDENEDEDEGEGEGDSSEDEDE).

This is an uncharacterized protein from Dictyostelium sp. (strain GA11) (Slime mold).